Here is a 239-residue protein sequence, read N- to C-terminus: tRNA (guanine-N(7)-)-methyltransferase (239 aa).

S-adenosyl-L-methionine is bound by residues Glu-68, Glu-93, Asp-120, and Asp-143. Asp-143 is an active-site residue. Residues Lys-147, Asp-180, and Thr-217–Glu-220 each bind substrate.

It belongs to the class I-like SAM-binding methyltransferase superfamily. TrmB family.

The enzyme catalyses guanosine(46) in tRNA + S-adenosyl-L-methionine = N(7)-methylguanosine(46) in tRNA + S-adenosyl-L-homocysteine. It participates in tRNA modification; N(7)-methylguanine-tRNA biosynthesis. In terms of biological role, catalyzes the formation of N(7)-methylguanine at position 46 (m7G46) in tRNA. The polypeptide is tRNA (guanine-N(7)-)-methyltransferase (Vibrio cholerae serotype O1 (strain ATCC 39541 / Classical Ogawa 395 / O395)).